A 272-amino-acid polypeptide reads, in one-letter code: Phosphatidylglycerol--prolipoprotein diacylglyceryl transferase (272 aa).

Transmembrane regions (helical) follow at residues 21–41 (IAVH…IFVA), 60–80 (YIWW…VLFY), 101–121 (GVYA…FIIA), and 131–151 (VSFW…YIFG). Residue Arg152 coordinates a 1,2-diacyl-sn-glycero-3-phospho-(1'-sn-glycerol). A run of 3 helical transmembrane segments spans residues 181 to 201 (PSQI…LAFY), 209 to 229 (GQLA…AEFF), and 244 to 264 (LTMG…FYVV).

Belongs to the Lgt family.

The protein resides in the cell inner membrane. It catalyses the reaction L-cysteinyl-[prolipoprotein] + a 1,2-diacyl-sn-glycero-3-phospho-(1'-sn-glycerol) = an S-1,2-diacyl-sn-glyceryl-L-cysteinyl-[prolipoprotein] + sn-glycerol 1-phosphate + H(+). The protein operates within protein modification; lipoprotein biosynthesis (diacylglyceryl transfer). Its function is as follows. Catalyzes the transfer of the diacylglyceryl group from phosphatidylglycerol to the sulfhydryl group of the N-terminal cysteine of a prolipoprotein, the first step in the formation of mature lipoproteins. This is Phosphatidylglycerol--prolipoprotein diacylglyceryl transferase from Aliarcobacter butzleri (strain RM4018) (Arcobacter butzleri).